The following is a 141-amino-acid chain: Large ribosomal subunit protein uL6 (141 aa).

It belongs to the universal ribosomal protein uL6 family.

This is Large ribosomal subunit protein uL6 from Haemonchus contortus (Barber pole worm).